Here is a 130-residue protein sequence, read N- to C-terminus: Ribosome-binding factor A (130 aa).

This sequence belongs to the RbfA family. Monomer. Binds 30S ribosomal subunits, but not 50S ribosomal subunits or 70S ribosomes.

Its subcellular location is the cytoplasm. One of several proteins that assist in the late maturation steps of the functional core of the 30S ribosomal subunit. Associates with free 30S ribosomal subunits (but not with 30S subunits that are part of 70S ribosomes or polysomes). Required for efficient processing of 16S rRNA. May interact with the 5'-terminal helix region of 16S rRNA. This chain is Ribosome-binding factor A, found in Methylibium petroleiphilum (strain ATCC BAA-1232 / LMG 22953 / PM1).